The sequence spans 193 residues: MLLSDRDIRKSIDSGDLGIDPFDPLLIQPSSIDVRMDRYFRVFNNSKYTHIDPKLNQDELTSLVEVADGDPFVLHPGEFVLAATLEKFTLPHHLAGRLEGKSSLGRLGLLTHSTAGFIDPGFSGHITLELSNVANLPITLWPGMKVGQLALFMMSSPAETPYGSGSLGSKYQGQRGPTPSKGYLNFSSEQDSD.

DCTP contacts are provided by residues 101 to 106, Asp119, 127 to 129, Gln148, Tyr162, and Gln174; these read KSSLGR and TLE. The Proton donor/acceptor role is filled by Glu129. The disordered stretch occupies residues 160-193; the sequence is TPYGSGSLGSKYQGQRGPTPSKGYLNFSSEQDSD. Over residues 167 to 177 the composition is skewed to polar residues; the sequence is LGSKYQGQRGP.

It belongs to the dCTP deaminase family. Homotrimer.

It catalyses the reaction dCTP + 2 H2O = dUMP + NH4(+) + diphosphate. It participates in pyrimidine metabolism; dUMP biosynthesis; dUMP from dCTP: step 1/1. Functionally, bifunctional enzyme that catalyzes both the deamination of dCTP to dUTP and the hydrolysis of dUTP to dUMP without releasing the toxic dUTP intermediate. This Corynebacterium efficiens (strain DSM 44549 / YS-314 / AJ 12310 / JCM 11189 / NBRC 100395) protein is dCTP deaminase, dUMP-forming.